The primary structure comprises 256 residues: NifU-like protein, mitochondrial (256 aa).

A CxxC motif motif is present at residues 196–199 (CTSC).

It belongs to the NifU family. In terms of assembly, homodimer; in absence of BOL3, probably bridged by an iron-sulfure cluster. Interacts with BOL3. Interacts with apo-target proteins, such as ACO1, LYS4, ACO2 and SDH2.

It is found in the mitochondrion matrix. Its function is as follows. Involved in iron homeostasis within the mitochondrion where it is involved in the assembly of iron-sulfur proteins. Together with BOL3, required during the last step of iron-sulfur protein assembly when the iron-sulfur cluster is inserted into the target protein. Required for protecting iron sulfur clusters from oxidative damage. The sequence is that of NifU-like protein, mitochondrial (NFU1) from Saccharomyces cerevisiae (strain ATCC 204508 / S288c) (Baker's yeast).